Reading from the N-terminus, the 284-residue chain is Nucleotide-binding protein Sbal_3671 (284 aa).

8–15 (GRSGSGKS) contributes to the ATP binding site. 56–59 (DVRN) serves as a coordination point for GTP.

This sequence belongs to the RapZ-like family.

Its function is as follows. Displays ATPase and GTPase activities. This Shewanella baltica (strain OS155 / ATCC BAA-1091) protein is Nucleotide-binding protein Sbal_3671.